The following is a 556-amino-acid chain: Carotenoid-cleaving dioxygenase, mitochondrial (556 aa).

Residues His203, His263, His334, and His550 each coordinate Fe cation.

It belongs to the carotenoid oxygenase family. Requires Fe(2+) as cofactor.

The protein localises to the mitochondrion. The catalysed reaction is all-trans-beta-carotene + O2 = beta-ionone + all-trans-10'-apo-beta-carotenal. It catalyses the reaction 5-cis-lycopene + O2 = 5-cis-10'-apo-lycopenal + (3E,5E)-6,10-dimethylundeca-3,5,9-trien-2-one. The enzyme catalyses 13-cis-lycopene + O2 = 13-cis-10'-apo-lycopenal + (3E,5E)-6,10-dimethylundeca-3,5,9-trien-2-one. It carries out the reaction lutein + O2 = (3R,6R)-hydroxy-alpha-ionone + (3R)-3-hydroxy-10'-apo-beta-carotenal. The catalysed reaction is lutein + O2 = (3R,6R)-3-hydroxy-10'-apo-alpha-carotenal + (3R)-hydroxy-beta-ionone. It catalyses the reaction all-trans-zeaxanthin + 2 O2 = 4,9-dimethyldodeca-2,4,6,8,10-pentaenedial + 2 (3R)-hydroxy-beta-ionone. The enzyme catalyses all-trans-zeaxanthin + O2 = (3R)-3-hydroxy-10'-apo-beta-carotenal + (3R)-hydroxy-beta-ionone. It carries out the reaction beta-cryptoxanthin + O2 = all-trans-10'-apo-beta-carotenal + (3R)-hydroxy-beta-ionone. The catalysed reaction is all-trans-10'-apo-beta-carotenal + O2 = beta-ionone + 4,9-dimethyldodeca-2,4,6,8,10-pentaenedial. It catalyses the reaction (3R)-3-hydroxy-10'-apo-beta-carotenal + O2 = 4,9-dimethyldodeca-2,4,6,8,10-pentaenedial + (3R)-hydroxy-beta-ionone. The enzyme catalyses (3R,6R)-3-hydroxy-10'-apo-alpha-carotenal + O2 = (3R,6R)-hydroxy-alpha-ionone + 4,9-dimethyldodeca-2,4,6,8,10-pentaenedial. In terms of biological role, broad specificity mitochondrial dioxygenase that mediates the asymmetric oxidative cleavage of carotenoids. Cleaves carotenes (pure hydrocarbon carotenoids) such as all-trans-beta-carotene and lycopene as well as xanthophylls (oxygenated carotenoids) such as zeaxanthin, lutein and beta-cryptoxanthin at both the 9,10 and the 9',10' carbon-carbon double bond. Through its function in carotenoids metabolism regulates oxidative stress and the production of important signaling molecules. This chain is Carotenoid-cleaving dioxygenase, mitochondrial, found in Macaca fascicularis (Crab-eating macaque).